The chain runs to 60 residues: Small, acid-soluble spore protein H 2 (60 aa).

The tract at residues threonine 38–serine 60 is disordered.

The protein belongs to the SspH family.

Its subcellular location is the spore core. This is Small, acid-soluble spore protein H 2 from Geobacillus thermodenitrificans (strain NG80-2).